Reading from the N-terminus, the 316-residue chain is Dehydrogenase/reductase SDR family protein 7-like (316 aa).

Topologically, residues 1–18 (MFFYKIIYFIGFPYIVLR) are cytoplasmic. The chain crosses the membrane as a helical; Signal-anchor for type II membrane protein span at residues 19-39 (LIVSIILPIASLYFIYCNFIA). Residues 40 to 316 (PKLREKPESS…HKFASSSVKK (277 aa)) are Peroxisomal-facing. 56–80 (IITGASSGIGAELAKKYARLGCKVT) contacts NAD(+). Ser194 serves as a coordination point for substrate. The active-site Proton acceptor is the Tyr207.

Belongs to the short-chain dehydrogenases/reductases (SDR) family.

The protein localises to the peroxisome membrane. In terms of biological role, putative oxidoreductase. This is Dehydrogenase/reductase SDR family protein 7-like from Dictyostelium discoideum (Social amoeba).